We begin with the raw amino-acid sequence, 243 residues long: 6-carboxyhexanoate--CoA ligase (243 aa).

It belongs to the BioW family. In terms of assembly, homodimer. The cofactor is Mg(2+).

The enzyme catalyses heptanedioate + ATP + CoA = 6-carboxyhexanoyl-CoA + AMP + diphosphate. It participates in metabolic intermediate metabolism; pimeloyl-CoA biosynthesis; pimeloyl-CoA from pimelate: step 1/1. In terms of biological role, catalyzes the transformation of pimelate into pimeloyl-CoA with concomitant hydrolysis of ATP to AMP. In Thermocrinis albus (strain DSM 14484 / JCM 11386 / HI 11/12), this protein is 6-carboxyhexanoate--CoA ligase.